The sequence spans 332 residues: tRNA U34 carboxymethyltransferase (332 aa).

Carboxy-S-adenosyl-L-methionine contacts are provided by residues lysine 91, tryptophan 105, lysine 110, glycine 130, aspartate 152–serine 154, isoleucine 181–glutamate 182, methionine 196, tyrosine 200, and arginine 315.

It belongs to the class I-like SAM-binding methyltransferase superfamily. CmoB family. Homotetramer.

The catalysed reaction is carboxy-S-adenosyl-L-methionine + 5-hydroxyuridine(34) in tRNA = 5-carboxymethoxyuridine(34) in tRNA + S-adenosyl-L-homocysteine + H(+). Functionally, catalyzes carboxymethyl transfer from carboxy-S-adenosyl-L-methionine (Cx-SAM) to 5-hydroxyuridine (ho5U) to form 5-carboxymethoxyuridine (cmo5U) at position 34 in tRNAs. The polypeptide is tRNA U34 carboxymethyltransferase (Shewanella sp. (strain W3-18-1)).